Here is a 389-residue protein sequence, read N- to C-terminus: Major outer membrane porin (389 aa).

Residues 1–23 (MKKLLKSALLSAAFAGSVGSLQA) form the signal peptide.

This sequence belongs to the chlamydial porin (CP) (TC 1.B.2) family. Part of a disulfide cross-linked outer membrane complex (COMC) composed of the major outer membrane porin (MOMP), the small cysteine-rich protein (OmcA) and the large cysteine-rich periplasmic protein (OmcB).

It is found in the cell outer membrane. In elementary bodies (EBs, the infectious stage, which is able to survive outside the host cell) provides the structural integrity of the outer envelope through disulfide cross-links with the small cysteine-rich protein and the large cysteine-rich periplasmic protein. It has been described in publications as the Sarkosyl-insoluble COMC (Chlamydia outer membrane complex), and serves as the functional equivalent of peptidoglycan. In terms of biological role, permits diffusion of specific solutes through the outer membrane. The sequence is that of Major outer membrane porin (ompA) from Chlamydia pneumoniae (Chlamydophila pneumoniae).